The chain runs to 87 residues: U3-theraphotoxin-Hhn1n (87 aa).

The signal sequence occupies residues 1 to 24 (MVNMKASMFLTFAGLVLLFVVCYA). The propeptide occupies 25–52 (SESEEKEFPKEMLSSIFAVDNDFKQEER). Disulfide bonds link Cys-54–Cys-67, Cys-61–Cys-72, and Cys-66–Cys-79.

The protein belongs to the neurotoxin 10 (Hwtx-1) family. 51 (Hntx-8) subfamily. Hntx-8 sub-subfamily. Expressed by the venom gland.

It is found in the secreted. Weakly inhibits Kv11.1/KCNH2/ERG1, Kv1.2/KCNA2, Kv1.3/KCNA3, and Kv2.1/KCNB1. This is U3-theraphotoxin-Hhn1n from Cyriopagopus hainanus (Chinese bird spider).